The chain runs to 329 residues: uncharacterized protein (329 aa).

One can recognise an SIS domain in the interval 38–184 (IVKLILKSQE…MACLMRAKNF (147 aa)). 56–61 (GVGKSA) lines the ATP pocket. CBS domains are found at residues 211–267 (QTTN…GVSL) and 270–329 (EVRH…GLKA).

It belongs to the SIS family. GutQ/KpsF subfamily.

This is an uncharacterized protein from Helicobacter pylori (strain ATCC 700392 / 26695) (Campylobacter pylori).